A 215-amino-acid chain; its full sequence is Ependymin (215 aa).

The first 20 residues, 1-20 (MHTVKLLCVVFSCLCAVAWA), serve as a signal peptide directing secretion. Residues N71 and N94 are each glycosylated (N-linked (GlcNAc...) asparagine).

It belongs to the ependymin family. As to quaternary structure, forms disulfide-linked dimers. In terms of processing, binds calcium through the terminal sialic acids. As to expression, EPDs are synthesized in the meninx and secreted in the cerebrospinal fluid.

Its subcellular location is the secreted. Functionally, may play a role in neural plasticity. May be involved during axon regeneration. The sequence is that of Ependymin (epd) from Cyprinus carpio (Common carp).